A 563-amino-acid chain; its full sequence is Arginine--tRNA ligase (563 aa).

A 'HIGH' region motif is present at residues 121-131; it reads PNIAKPFSIGH.

This sequence belongs to the class-I aminoacyl-tRNA synthetase family. In terms of assembly, monomer.

Its subcellular location is the cytoplasm. The enzyme catalyses tRNA(Arg) + L-arginine + ATP = L-arginyl-tRNA(Arg) + AMP + diphosphate. In Streptococcus pyogenes serotype M1, this protein is Arginine--tRNA ligase.